Reading from the N-terminus, the 574-residue chain is Sulfate adenylyltransferase (574 aa).

An N-terminal region spans residues 1 to 169 (MANSPHGGVL…IEAVNKLNHY (169 aa)). A catalytic region spans residues 170-394 (DYVALRYSPA…LRESSPPRAT (225 aa)). Position 197 (glutamine 197) interacts with sulfate. ATP contacts are provided by residues 197-200 (QTRN) and 291-294 (GRDH). Residues threonine 198, arginine 199, and asparagine 200 contribute to the active site. Arginine 199 is a sulfate binding site. Residue alanine 295 participates in sulfate binding. Residue valine 333 coordinates ATP. The allosteric regulation domain; adenylyl-sulfate kinase-like stretch occupies residues 395-574 (QGFTIFLTGY…LESEGYFDRL (180 aa)). Residues 434–437 (DTVR), arginine 451, 477–478 (IA), and arginine 516 each bind 3'-phosphoadenylyl sulfate.

The protein in the N-terminal section; belongs to the sulfate adenylyltransferase family. In the C-terminal section; belongs to the APS kinase family. As to quaternary structure, homohexamer. Dimer of trimers.

It is found in the cytoplasm. It catalyses the reaction sulfate + ATP + H(+) = adenosine 5'-phosphosulfate + diphosphate. It participates in sulfur metabolism; hydrogen sulfide biosynthesis; sulfite from sulfate: step 1/3. With respect to regulation, allosterically inhibited by 3'-phosphoadenosine 5'-phosphosulfate (PAPS). Catalyzes the first intracellular reaction of sulfate assimilation, forming adenosine-5'-phosphosulfate (APS) from inorganic sulfate and ATP. Plays an important role in sulfate activation as a component of the biosynthesis pathway of sulfur-containing amino acids. This chain is Sulfate adenylyltransferase, found in Aspergillus terreus (strain NIH 2624 / FGSC A1156).